The chain runs to 569 residues: Archaeosine synthase (569 aa).

The PUA domain maps to 495–569 (SGGKDINYIE…ALVNIRNVKS (75 aa)).

This sequence belongs to the archaeosine synthase type 1 family. Homodimer.

The enzyme catalyses 7-cyano-7-carbaguanosine(15) in tRNA + L-glutamine + H2O = archaeosine(15) in tRNA + L-glutamate. It functions in the pathway tRNA modification; archaeosine-tRNA biosynthesis. In terms of biological role, is responsible for the final step in the biosynthesis of archaeosine, a modified nucleoside present in the dihydrouridine loop (D-loop) of archaeal tRNA. Catalyzes the conversion of 7-cyano-7-deazaguanine (preQ0)-modified tRNA to archaeosine-tRNA, transforming a nitrile group to a formamidine group. Can use either glutamine, asparagine or ammonium as amino donor. This is Archaeosine synthase from Methanocaldococcus jannaschii (strain ATCC 43067 / DSM 2661 / JAL-1 / JCM 10045 / NBRC 100440) (Methanococcus jannaschii).